A 251-amino-acid chain; its full sequence is Large ribosomal subunit protein uL3 (251 aa).

The residue at position 151 (glutamine 151) is an N5-methylglutamine. Residues 214 to 251 are disordered; the sequence is KDAPFPAGLKSAANSNSAPTETPAEEVAAPEATEGQEG. Over residues 231–251 the composition is skewed to low complexity; it reads APTETPAEEVAAPEATEGQEG.

It belongs to the universal ribosomal protein uL3 family. As to quaternary structure, part of the 50S ribosomal subunit. Forms a cluster with proteins L14 and L19. Methylated by PrmB.

One of the primary rRNA binding proteins, it binds directly near the 3'-end of the 23S rRNA, where it nucleates assembly of the 50S subunit. The chain is Large ribosomal subunit protein uL3 from Rhizorhabdus wittichii (strain DSM 6014 / CCUG 31198 / JCM 15750 / NBRC 105917 / EY 4224 / RW1) (Sphingomonas wittichii).